Reading from the N-terminus, the 463-residue chain is UDP-N-acetylmuramoylalanine--D-glutamate ligase (463 aa).

126–132 is a binding site for ATP; the sequence is GSNGKST.

It belongs to the MurCDEF family.

It is found in the cytoplasm. It catalyses the reaction UDP-N-acetyl-alpha-D-muramoyl-L-alanine + D-glutamate + ATP = UDP-N-acetyl-alpha-D-muramoyl-L-alanyl-D-glutamate + ADP + phosphate + H(+). The protein operates within cell wall biogenesis; peptidoglycan biosynthesis. Cell wall formation. Catalyzes the addition of glutamate to the nucleotide precursor UDP-N-acetylmuramoyl-L-alanine (UMA). The chain is UDP-N-acetylmuramoylalanine--D-glutamate ligase from Idiomarina loihiensis (strain ATCC BAA-735 / DSM 15497 / L2-TR).